Reading from the N-terminus, the 538-residue chain is Phosphoenolpyruvate carboxykinase (ATP) (538 aa).

Arginine 64 lines the substrate pocket. ATP is bound at residue arginine 152. Tyrosine 205 and lysine 211 together coordinate substrate. Residues lysine 211, histidine 230, and 246-254 each bind ATP; that span reads GLSGTGKTT. 2 residues coordinate Mn(2+): lysine 211 and histidine 230. Aspartate 267 contacts Mn(2+). ATP is bound by residues glutamate 295, arginine 331, arginine 344, 447-448, and threonine 453; that span reads RI. Arginine 331 contacts substrate.

This sequence belongs to the phosphoenolpyruvate carboxykinase (ATP) family. As to quaternary structure, monomer. It depends on Mn(2+) as a cofactor.

The protein resides in the cytoplasm. It catalyses the reaction oxaloacetate + ATP = phosphoenolpyruvate + ADP + CO2. Its pathway is carbohydrate biosynthesis; gluconeogenesis. In terms of biological role, involved in gluconeogenesis. Catalyzes the conversion of oxaloacetate (OAA) to phosphoenolpyruvate (PEP) through direct phosphoryl transfer between the nucleoside triphosphate and OAA. The polypeptide is Phosphoenolpyruvate carboxykinase (ATP) (Actinobacillus succinogenes (strain ATCC 55618 / DSM 22257 / CCUG 43843 / 130Z)).